The sequence spans 699 residues: Elongation factor G (699 aa).

Positions 8–290 constitute a tr-type G domain; it reads ERYRNIGIMA…GVIEYLPSPV (283 aa). GTP-binding positions include 17–24, 88–92, and 142–145; these read AHIDAGKT, DTPGH, and NKMD.

This sequence belongs to the TRAFAC class translation factor GTPase superfamily. Classic translation factor GTPase family. EF-G/EF-2 subfamily.

It is found in the cytoplasm. Functionally, catalyzes the GTP-dependent ribosomal translocation step during translation elongation. During this step, the ribosome changes from the pre-translocational (PRE) to the post-translocational (POST) state as the newly formed A-site-bound peptidyl-tRNA and P-site-bound deacylated tRNA move to the P and E sites, respectively. Catalyzes the coordinated movement of the two tRNA molecules, the mRNA and conformational changes in the ribosome. This chain is Elongation factor G, found in Alkalilimnicola ehrlichii (strain ATCC BAA-1101 / DSM 17681 / MLHE-1).